The chain runs to 946 residues: Inter-alpha-trypsin inhibitor heavy chain H2 (946 aa).

The signal sequence occupies residues 1 to 18; the sequence is MQRLACVLIWLFLLEEQA. A propeptide spanning residues 19 to 54 is cleaved from the precursor; it reads FEIPANEYSEFAGYSNLVELAPDKFPFVQENRRYQR. Positions 56–185 constitute a VIT domain; that stretch reads LPEESGEMTD…KVQFELHYQE (130 aa). Residue Ser-60 is modified to Phosphoserine. 2 N-linked (GlcNAc...) asparagine glycosylation sites follow: Asn-118 and Asn-263. 4-carboxyglutamate occurs at positions 282 and 283. A VWFA domain is found at 308–468; sequence PKNILFVIDV…YDFLKRLSNE (161 aa). The N-linked (GlcNAc...) asparagine glycan is linked to Asn-445. Ser-466 carries the phosphoserine modification. N-linked (GlcNAc...) asparagine glycosylation is present at Asn-578. Asp-702 carries the aspartate 1-(chondroitin 4-sulfate)-ester modification. Positions 703 to 946 are excised as a propeptide; the sequence is PHFIIYLPKS…PQLYSFLKRP (244 aa). Ser-886 bears the Phosphoserine mark.

Belongs to the ITIH family. As to quaternary structure, I-alpha-I plasma protease inhibitors are assembled from one or two heavy chains (HC) and one light chain, bikunin. Inter-alpha-inhibitor (I-alpha-I) is composed of ITIH1/HC1, ITIH2/HC2 and bikunin. In terms of processing, heavy chains are linked to bikunin via chondroitin 4-sulfate esterified to the alpha-carboxyl of the C-terminal aspartate after propeptide cleavage. Post-translationally, phosphorylated by FAM20C in the extracellular medium.

It is found in the secreted. May act as a carrier of hyaluronan in serum or as a binding protein between hyaluronan and other matrix protein, including those on cell surfaces in tissues to regulate the localization, synthesis and degradation of hyaluronan which are essential to cells undergoing biological processes. The polypeptide is Inter-alpha-trypsin inhibitor heavy chain H2 (ITIH2) (Mesocricetus auratus (Golden hamster)).